An 83-amino-acid chain; its full sequence is Colicin-E5 immunity protein (83 aa).

Its function is as follows. This protein is able to protect a cell, which harbors the plasmid ColE5 encoding colicin E5, against colicin E5. This Escherichia coli protein is Colicin-E5 immunity protein (imm).